Here is a 281-residue protein sequence, read N- to C-terminus: Probable feruloyl esterase A (281 aa).

Positions 1–21 (MKNFFSMHAILLACSAGAGLA) are cleaved as a signal peptide. Intrachain disulfides connect Cys50/Cys279, Cys112/Cys115, and Cys248/Cys255. Position 98 (Asp98) interacts with substrate. Asn100 carries N-linked (GlcNAc...) asparagine glycosylation. Position 101 (Tyr101) interacts with substrate. Ser154 serves as the catalytic Nucleophile. Asn173 is a glycosylation site (N-linked (GlcNAc...) asparagine). Catalysis depends on Asp215, which acts as the Charge relay system. His268 serves as a coordination point for substrate. His268 serves as the catalytic Charge relay system.

Belongs to the AB hydrolase superfamily. FaeA family.

It is found in the secreted. The catalysed reaction is feruloyl-polysaccharide + H2O = ferulate + polysaccharide.. Involved in degradation of plant cell walls. Hydrolyzes the feruloyl-arabinose ester bond in arabinoxylans, and the feruloyl-galactose ester bond in pectin. The sequence is that of Probable feruloyl esterase A (faeA) from Aspergillus oryzae (strain ATCC 42149 / RIB 40) (Yellow koji mold).